The primary structure comprises 176 residues: MPSGLICVARIGAPHGVRGAVRLWSFTADPFAVSDYGPLVTKDGARQFEIASAREAKSHLVVTLKGVTTRDEAERLNGVELYVARDKLPPTEADEYYHADLIGLAAVTTTGDPLGKVVAIHNFGAGDIIEIAPPSGPTLLLPFTNAVVPTVDLAVGQVVIEPPNEIEGDTPNHPEA.

The region spanning 93 to 166 is the PRC barrel domain; the sequence is ADEYYHADLI…QVVIEPPNEI (74 aa).

This sequence belongs to the RimM family. In terms of assembly, binds ribosomal protein uS19.

It is found in the cytoplasm. Functionally, an accessory protein needed during the final step in the assembly of 30S ribosomal subunit, possibly for assembly of the head region. Essential for efficient processing of 16S rRNA. May be needed both before and after RbfA during the maturation of 16S rRNA. It has affinity for free ribosomal 30S subunits but not for 70S ribosomes. The chain is Ribosome maturation factor RimM from Rhodopseudomonas palustris (strain ATCC BAA-98 / CGA009).